The sequence spans 515 residues: Nuclear hormone receptor family member nhr-62 (515 aa).

Positions 95 to 170 (NLVCVVCGDQ…AGMNPRAVQS (76 aa)) form a DNA-binding region, nuclear receptor. 2 NR C4-type zinc fingers span residues 98–118 (CVVC…CNGC) and 134–153 (CRFE…CRAC). Positions 169 to 195 (QSERVEREQNGSPNQIEEDDYKDLSSP) are disordered. An NR LBD domain is found at 225–509 (EMAKLSEQIV…YLCHEVQFIQ (285 aa)). The AF-2 stretch occupies residues 498–509 (SEYLCHEVQFIQ).

It belongs to the nuclear hormone receptor family. Widely expressed at a low level in many tissues including the pharynx, sensory neurons, intestine, spermatheca, hypodermis, and excretory cell.

It localises to the nucleus. Orphan nuclear hormone receptor. Required for metabolic and physiologic responses associated with dietary-restriction-induced longevity. Modulates triglyceride and lipid metabolism and autophagy, associated with dietary-restriction, probably acting via regulation of transcription of target genes. The sequence is that of Nuclear hormone receptor family member nhr-62 (nhr-62) from Caenorhabditis elegans.